The primary structure comprises 252 residues: Origin recognition complex subunit 6 (252 aa).

The residue at position 195 (T195) is a Phosphothreonine. K210 is covalently cross-linked (Glycyl lysine isopeptide (Lys-Gly) (interchain with G-Cter in SUMO2)). A Phosphothreonine modification is found at T229.

This sequence belongs to the ORC6 family. In terms of assembly, component of ORC, a complex composed of at least 6 subunits: ORC1, ORC2, ORC3, ORC4, ORC5 and ORC6. ORC is regulated in a cell-cycle dependent manner. It is sequentially assembled at the exit from anaphase of mitosis and disassembled as cells enter S phase. Interacts with DBF4.

It localises to the nucleus. Its function is as follows. Component of the origin recognition complex (ORC) that binds origins of replication. DNA-binding is ATP-dependent. The specific DNA sequences that define origins of replication have not been identified yet. ORC is required to assemble the pre-replication complex necessary to initiate DNA replication. This chain is Origin recognition complex subunit 6 (ORC6), found in Bos taurus (Bovine).